The sequence spans 264 residues: SPRY domain-containing SOCS box protein 2 (264 aa).

Residues 1 to 18 (MGQTALARGSSSTPSSHA) are compositionally biased toward polar residues. The tract at residues 1-53 (MGQTALARGSSSTPSSHALYSDLSPPEGLEELLSAPPPDLGAQRHHGWNPKDC) is disordered. Residues 21-34 (SDLSPPEGLEELLS) are compositionally biased toward low complexity. The B30.2/SPRY domain occupies 26–221 (PEGLEELLSA…VRIRYLGERR (196 aa)). An SOCS box domain is found at 222–264 (AEEPQSLLHLSRLCVRHALGDTRLGQISSLPLPPAMKRYLLYK).

Belongs to the SPSB family. As to quaternary structure, component of the probable ECS(SPSB2) E3 ubiquitin-protein ligase complex which contains CUL5, RNF7/RBX2, Elongin BC complex and SPSB2. Interacts with CUL5, RNF7, ELOB and ELOC. Interacts with MET. Interacts (via B30.2/SPRY domain) with PAWR; this interaction occurs in association with the Elongin BC complex. Interacts with NOS2.

It localises to the cytoplasm. Its subcellular location is the cytosol. The protein operates within protein modification; protein ubiquitination. Functionally, substrate recognition component of a SCF-like ECS (Elongin BC-CUL2/5-SOCS-box protein) E3 ubiquitin-protein ligase complex which mediates the ubiquitination and subsequent proteasomal degradation of target proteins. Negatively regulates nitric oxide (NO) production and limits cellular toxicity in activated macrophages by mediating the ubiquitination and proteasomal degradation of NOS2. Acts as a bridge which links NOS2 with the ECS E3 ubiquitin ligase complex components ELOC and CUL5. In Rattus norvegicus (Rat), this protein is SPRY domain-containing SOCS box protein 2 (Spsb2).